Consider the following 121-residue polypeptide: MARIAGINIPPHKHAEIGLTAIFGIGRTRARQICEASGIEYSKKIKDLTDADLEKIRDQIALFTIEGDLRRETTMNIKRLMDIGCYRGFRHRRGLPMRGQRTRTNARTRKGPRKAAQSLKK.

The disordered stretch occupies residues 93–121; it reads RGLPMRGQRTRTNARTRKGPRKAAQSLKK.

The protein belongs to the universal ribosomal protein uS13 family. In terms of assembly, part of the 30S ribosomal subunit. Forms a loose heterodimer with protein S19. Forms two bridges to the 50S subunit in the 70S ribosome.

Functionally, located at the top of the head of the 30S subunit, it contacts several helices of the 16S rRNA. In the 70S ribosome it contacts the 23S rRNA (bridge B1a) and protein L5 of the 50S subunit (bridge B1b), connecting the 2 subunits; these bridges are implicated in subunit movement. Contacts the tRNAs in the A and P-sites. In Variovorax paradoxus (strain S110), this protein is Small ribosomal subunit protein uS13.